The primary structure comprises 332 residues: Oxygen-dependent coproporphyrinogen-III oxidase (332 aa).

Serine 119 provides a ligand contact to coproporphyrinogen III. The active-site Proton donor is histidine 133. Residues 135–137 and 284–285 contribute to the coproporphyrinogen III site; these read NVR and GR.

This sequence belongs to the aerobic coproporphyrinogen-III oxidase family. As to quaternary structure, homodimer.

It catalyses the reaction coproporphyrinogen III + O2 + 2 H(+) = protoporphyrinogen IX + 2 CO2 + 2 H2O. It functions in the pathway porphyrin-containing compound metabolism; protoporphyrin-IX biosynthesis; protoporphyrinogen-IX from coproporphyrinogen-III (O2 route): step 1/1. Involved in the heme biosynthesis. Catalyzes the aerobic oxidative decarboxylation of propionate groups of rings A and B of coproporphyrinogen-III to yield the vinyl groups in protoporphyrinogen-IX. The chain is Oxygen-dependent coproporphyrinogen-III oxidase (cpox) from Dictyostelium discoideum (Social amoeba).